Here is a 68-residue protein sequence, read N- to C-terminus: Defensin gallicin (68 aa).

Residues 1-16 (MWIESDAGVAIDRHAR) form the signal peptide.

In terms of processing, contains 5 disulfide bonds. Expressed in hemolymph, gills, digestive gland, foot, adductor muscles and mantle.

It localises to the secreted. The protein localises to the target cell membrane. Shows antibacterial activity against numerous Gram-positive bacteria. It selectively inhibits peptidoglycan biosynthesis through complex formation with the cell wall precursor lipid II (1:1 molar ratio) thus inhibiting cell wall synthesis. This chain is Defensin gallicin, found in Mytilus galloprovincialis (Mediterranean mussel).